The following is a 347-amino-acid chain: NADH-ubiquinone oxidoreductase chain 2 (347 aa).

A run of 11 helical transmembrane segments spans residues 1–21 (MNPLIFSTILATIIMGTVIVM), 25–45 (HWLTIWIGFEMNMLAIIPMLM), 59–79 (YFLTQATASMLLMLAVIINLT), 96–116 (IIMTIALTMKLGLSPFHFWVP), 127–147 (CLILLTWQKLAPLSILYMISP), 149–169 (INLNLLLSMSLISIAIGGWGG), 178–198 (IMAYSSIAHMGWMTAVLAYNP), 200–220 (MTMLNLLVYITMTTTMFMLLI), 237–257 (IPLVTTLTLTIMLSLGGLPPL), 276–296 (IILPTLMAIMALLSLYFYMRL), and 325–345 (LLSPLIVTSTLTLPLAPTMLL).

This sequence belongs to the complex I subunit 2 family. In terms of assembly, core subunit of respiratory chain NADH dehydrogenase (Complex I) which is composed of 45 different subunits. Interacts with TMEM242.

The protein localises to the mitochondrion inner membrane. The enzyme catalyses a ubiquinone + NADH + 5 H(+)(in) = a ubiquinol + NAD(+) + 4 H(+)(out). Its function is as follows. Core subunit of the mitochondrial membrane respiratory chain NADH dehydrogenase (Complex I) which catalyzes electron transfer from NADH through the respiratory chain, using ubiquinone as an electron acceptor. Essential for the catalytic activity and assembly of complex I. The polypeptide is NADH-ubiquinone oxidoreductase chain 2 (Natalus tumidirostris (Trinidadian funnel-eared bat)).